Reading from the N-terminus, the 185-residue chain is Peptidoglycan-recognition protein SC1a (185 aa).

An N-terminal signal peptide occupies residues 1-21; that stretch reads MVSKVALLLAVLVCSQYMAQG. In terms of domain architecture, N-acetylmuramoyl-L-alanine amidase spans 46-170; it reads SYAIIHHTAG…RQVSATECPG (125 aa). His-51 serves as a coordination point for Zn(2+). Cysteines 58 and 64 form a disulfide. His-160 and Cys-168 together coordinate Zn(2+).

This sequence belongs to the N-acetylmuramoyl-L-alanine amidase 2 family. Requires Zn(2+) as cofactor.

It localises to the secreted. The enzyme catalyses Hydrolyzes the link between N-acetylmuramoyl residues and L-amino acid residues in certain cell-wall glycopeptides.. Its function is as follows. N-acetylmuramyl-L-alanine amidase involved in innate immunity by degrading bacterial peptidoglycans (PGN). Plays a scavenger role by digesting biologically active PGN into biologically inactive fragments. Has no direct bacteriolytic activity. The chain is Peptidoglycan-recognition protein SC1a from Drosophila melanogaster (Fruit fly).